The following is a 166-amino-acid chain: UPF0336 protein Mb0656 (166 aa).

Belongs to the UPF0336 family.

This is UPF0336 protein Mb0656 from Mycobacterium bovis (strain ATCC BAA-935 / AF2122/97).